A 130-amino-acid chain; its full sequence is Small ribosomal subunit protein uS8 (130 aa).

It belongs to the universal ribosomal protein uS8 family. Part of the 30S ribosomal subunit.

Its function is as follows. One of the primary rRNA binding proteins, it binds directly to 16S rRNA central domain where it helps coordinate assembly of the platform of the 30S subunit. This Methanothermococcus thermolithotrophicus (Methanococcus thermolithotrophicus) protein is Small ribosomal subunit protein uS8.